A 392-amino-acid polypeptide reads, in one-letter code: Alaserpin (392 aa).

An N-terminal signal peptide occupies residues methionine 1–alanine 16. Residue asparagine 85 is glycosylated (N-linked (GlcNAc...) asparagine).

It belongs to the serpin family. As to expression, hemolymph.

Its subcellular location is the secreted. The protein resides in the extracellular space. Its function is as follows. Inhibits elastase. This Manduca sexta (Tobacco hawkmoth) protein is Alaserpin.